The sequence spans 170 residues: Crossover junction endodeoxyribonuclease RuvC (170 aa).

Active-site residues include Asp-11, Glu-71, and Asp-143. Asp-11, Glu-71, and Asp-143 together coordinate Mg(2+).

It belongs to the RuvC family. As to quaternary structure, homodimer which binds Holliday junction (HJ) DNA. The HJ becomes 2-fold symmetrical on binding to RuvC with unstacked arms; it has a different conformation from HJ DNA in complex with RuvA. In the full resolvosome a probable DNA-RuvA(4)-RuvB(12)-RuvC(2) complex forms which resolves the HJ. It depends on Mg(2+) as a cofactor.

It localises to the cytoplasm. It carries out the reaction Endonucleolytic cleavage at a junction such as a reciprocal single-stranded crossover between two homologous DNA duplexes (Holliday junction).. The RuvA-RuvB-RuvC complex processes Holliday junction (HJ) DNA during genetic recombination and DNA repair. Endonuclease that resolves HJ intermediates. Cleaves cruciform DNA by making single-stranded nicks across the HJ at symmetrical positions within the homologous arms, yielding a 5'-phosphate and a 3'-hydroxyl group; requires a central core of homology in the junction. The consensus cleavage sequence is 5'-(A/T)TT(C/G)-3'. Cleavage occurs on the 3'-side of the TT dinucleotide at the point of strand exchange. HJ branch migration catalyzed by RuvA-RuvB allows RuvC to scan DNA until it finds its consensus sequence, where it cleaves and resolves the cruciform DNA. This chain is Crossover junction endodeoxyribonuclease RuvC, found in Rhizobium rhizogenes (strain K84 / ATCC BAA-868) (Agrobacterium radiobacter).